Reading from the N-terminus, the 257-residue chain is Short chain dehydrogenase ausX (257 aa).

Residues I11, D57, R119, Y151, K155, and V184 each coordinate NADP(+). Catalysis depends on Y151, which acts as the Proton acceptor. The active-site Lowers pKa of active site Tyr is the K155.

This sequence belongs to the short-chain dehydrogenases/reductases (SDR) family.

The protein operates within secondary metabolite biosynthesis; terpenoid biosynthesis. Short chain dehydrogenase; part of the gene cluster that mediates the biosynthesis of calidodehydroaustin, a fungal meroterpenoid. The first step of the pathway is the synthesis of 3,5-dimethylorsellinic acid by the polyketide synthase ausA. 3,5-dimethylorsellinic acid is then prenylated by the polyprenyl transferase ausN. Further epoxidation by the FAD-dependent monooxygenase ausM and cyclization by the probable terpene cyclase ausL lead to the formation of protoaustinoid A. Protoaustinoid A is then oxidized to spiro-lactone preaustinoid A3 by the combined action of the FAD-binding monooxygenases ausB and ausC, and the dioxygenase ausE. Acid-catalyzed keto-rearrangement and ring contraction of the tetraketide portion of preaustinoid A3 by ausJ lead to the formation of preaustinoid A4. The aldo-keto reductase ausK, with the help of ausH, is involved in the next step by transforming preaustinoid A4 into isoaustinone which is in turn hydroxylated by the P450 monooxygenase ausI to form austinolide. The cytochrome P450 monooxygenase ausG modifies austinolide to austinol. Austinol is further acetylated to austin by the O-acetyltransferase ausP, which spontaneously changes to dehydroaustin. The cytochrome P450 monooxygenase ausR then converts dehydroaustin is into 7-dehydrodehydroaustin. The hydroxylation catalyzed by ausR permits the O-acetyltransferase ausQ to add an additional acetyl group to the molecule, leading to the formation of acetoxydehydroaustin. The short chain dehydrogenase ausT catalyzes the reduction of the double bond present between carbon atoms 1 and 2 to convert 7-dehydrodehydroaustin into 1,2-dihydro-7-hydroxydehydroaustin. AusQ catalyzes not only an acetylation reaction but also the addition of the PKS ausV diketide product to 1,2-dihydro-7-hydroxydehydroaustin, forming precalidodehydroaustin. Finally, the iron/alpha-ketoglutarate-dependent dioxygenase converts precalidodehydroaustin into calidodehydroaustin. In Aspergillus calidoustus, this protein is Short chain dehydrogenase ausX.